The primary structure comprises 322 residues: Arginase (322 aa).

The Mn(2+) site is built by histidine 113, aspartate 141, histidine 143, and aspartate 145. Substrate-binding positions include 143 to 147 (HADIN), 154 to 156 (SGN), and aspartate 200. Positions 247 and 249 each coordinate Mn(2+). The substrate site is built by threonine 261 and glutamate 292.

It belongs to the arginase family. As to quaternary structure, homotrimer. Mn(2+) is required as a cofactor.

The enzyme catalyses L-arginine + H2O = urea + L-ornithine. It participates in nitrogen metabolism; urea cycle; L-ornithine and urea from L-arginine: step 1/1. In Coccidioides immitis (strain RS) (Valley fever fungus), this protein is Arginase (ARG).